The primary structure comprises 100 residues: Large ribosomal subunit protein uL23 (100 aa).

This sequence belongs to the universal ribosomal protein uL23 family. Part of the 50S ribosomal subunit. Contacts protein L29, and trigger factor when it is bound to the ribosome.

Its function is as follows. One of the early assembly proteins it binds 23S rRNA. One of the proteins that surrounds the polypeptide exit tunnel on the outside of the ribosome. Forms the main docking site for trigger factor binding to the ribosome. This chain is Large ribosomal subunit protein uL23, found in Synechococcus sp. (strain WH7803).